The sequence spans 258 residues: Glucosamine-6-phosphate deaminase (258 aa).

The active-site Proton acceptor; for enolization step is aspartate 65. The active-site For ring-opening step is aspartate 134. The active-site Proton acceptor; for ring-opening step is histidine 136. The active-site For ring-opening step is the glutamate 141.

It belongs to the glucosamine/galactosamine-6-phosphate isomerase family. NagB subfamily.

The enzyme catalyses alpha-D-glucosamine 6-phosphate + H2O = beta-D-fructose 6-phosphate + NH4(+). It functions in the pathway amino-sugar metabolism; N-acetylneuraminate degradation; D-fructose 6-phosphate from N-acetylneuraminate: step 5/5. In terms of biological role, catalyzes the reversible isomerization-deamination of glucosamine 6-phosphate (GlcN6P) to form fructose 6-phosphate (Fru6P) and ammonium ion. In Corynebacterium kroppenstedtii (strain DSM 44385 / JCM 11950 / CIP 105744 / CCUG 35717), this protein is Glucosamine-6-phosphate deaminase.